Consider the following 414-residue polypeptide: Dothistromin biosynthesis peroxidase dotB (414 aa).

Residues methionine 1–alanine 18 form the signal peptide. Cysteine 72 lines the heme pocket. Residues asparagine 187, asparagine 241, and asparagine 328 are each glycosylated (N-linked (GlcNAc...) asparagine).

The protein belongs to the chloroperoxidase family. Requires heme b as cofactor.

Its pathway is mycotoxin biosynthesis. Functionally, peroxidase; part of the fragmented gene cluster that mediates the biosynthesis of dothistromin (DOTH), a polyketide toxin very similar in structure to the aflatoxin precursor, versicolorin B. The first step of the pathway is the conversion of acetate to norsolorinic acid (NOR) and requires the fatty acid synthase subunits hexA and hexB, as well as the polyketide synthase pksA. PksA combines a hexanoyl starter unit and 7 malonyl-CoA extender units to synthesize the precursor NOR. The hexanoyl starter unit is provided to the acyl-carrier protein (ACP) domain by the fungal fatty acid synthase hexA/hexB. The second step is the conversion of NOR to averantin (AVN) and requires the norsolorinic acid ketoreductase nor1, which catalyzes the dehydration of norsolorinic acid to form (1'S)-averantin. The cytochrome P450 monooxygenase avnA then catalyzes the hydroxylation of AVN to 5'hydroxyaverantin (HAVN). The next step is performed by adhA that transforms HAVN to averufin (AVF). Averufin might then be converted to hydroxyversicolorone by cypX and avfA. Hydroxyversicolorone is further converted versiconal hemiacetal acetate (VHA) by moxY. VHA is then the substrate for the versiconal hemiacetal acetate esterase est1 to yield versiconal (VAL). Versicolorin B synthase vbsA then converts VAL to versicolorin B (VERB) by closing the bisfuran ring. Then, the activity of the versicolorin B desaturase verB leads to versicolorin A (VERA). DotB, a predicted chloroperoxidase, may perform epoxidation of the A-ring of VERA. Alternatively, a cytochrome P450, such as cypX or avnA could catalyze this step. It is also possible that another, uncharacterized, cytochrome P450 enzyme is responsible for this step. Opening of the epoxide could potentially be achieved by the epoxide hydrolase epoA. However, epoA seems not to be required for DOTH biosynthesis, but other epoxide hydrolases may have the ability to complement this hydrolysis. Alternatively, opening of the epoxide ring could be achieved non-enzymatically. The next step is the deoxygenation of ring A to yield the 5,8-dihydroxyanthraquinone which is most likely catalyzed by the NADPH dehydrogenase encoded by ver1. The last stages of DOTH biosynthesis are proposed to involve hydroxylation of the bisfuran. OrdB and norB might have oxidative roles here. An alternative possibility is that cytochrome P450 monoogenases such as avnA and cypX might perform these steps in addition to previously proposed steps. This is Dothistromin biosynthesis peroxidase dotB from Dothistroma septosporum (Red band needle blight fungus).